The chain runs to 251 residues: Ubiquitin-conjugating enzyme E2 22 (251 aa).

A UBC core domain is found at 10–156 (NVIKQLAKEL…ARLYTGIHAK (147 aa)). The Glycyl thioester intermediate role is filled by cysteine 94. The span at 230–240 (GLAKVQADKKK) shows a compositional bias: basic and acidic residues. Positions 230–251 (GLAKVQADKKKVDARKKSLKRL) are disordered. A coiled-coil region spans residues 230-251 (GLAKVQADKKKVDARKKSLKRL). Residues 241 to 251 (VDARKKSLKRL) are compositionally biased toward basic residues.

It belongs to the ubiquitin-conjugating enzyme family. In terms of processing, self-ubiquitinated. As to expression, expressed in seeds, pistils, siliques, hypocotyls and leaves.

The enzyme catalyses S-ubiquitinyl-[E1 ubiquitin-activating enzyme]-L-cysteine + [E2 ubiquitin-conjugating enzyme]-L-cysteine = [E1 ubiquitin-activating enzyme]-L-cysteine + S-ubiquitinyl-[E2 ubiquitin-conjugating enzyme]-L-cysteine.. It functions in the pathway protein modification; protein ubiquitination. Accepts the ubiquitin from the E1 complex and catalyzes its covalent attachment to other proteins. In Arabidopsis thaliana (Mouse-ear cress), this protein is Ubiquitin-conjugating enzyme E2 22 (UBC22).